Reading from the N-terminus, the 177-residue chain is UPF0251 protein Cag_0886 (177 aa).

Residues 147-177 (GGCLSDEESDEQENEQRTVGYPESEEELEIE) form a disordered region.

It belongs to the UPF0251 family.

This chain is UPF0251 protein Cag_0886, found in Chlorobium chlorochromatii (strain CaD3).